A 153-amino-acid chain; its full sequence is Large ribosomal subunit protein uL22 (153 aa).

It belongs to the universal ribosomal protein uL22 family. In terms of assembly, part of the 50S ribosomal subunit.

Functionally, this protein binds specifically to 23S rRNA. It makes multiple contacts with different domains of the 23S rRNA in the assembled 50S subunit and ribosome. Its function is as follows. The globular domain of the protein is located near the polypeptide exit tunnel on the outside of the subunit, while an extended beta-hairpin is found that lines the wall of the exit tunnel in the center of the 70S ribosome. In Methanoculleus marisnigri (strain ATCC 35101 / DSM 1498 / JR1), this protein is Large ribosomal subunit protein uL22.